A 297-amino-acid polypeptide reads, in one-letter code: UDP-N-acetylenolpyruvoylglucosamine reductase (297 aa).

One can recognise an FAD-binding PCMH-type domain in the interval isoleucine 27–glycine 192. Arginine 170 is an active-site residue. Serine 220 acts as the Proton donor in catalysis. Glutamate 290 is an active-site residue.

This sequence belongs to the MurB family. It depends on FAD as a cofactor.

It localises to the cytoplasm. It catalyses the reaction UDP-N-acetyl-alpha-D-muramate + NADP(+) = UDP-N-acetyl-3-O-(1-carboxyvinyl)-alpha-D-glucosamine + NADPH + H(+). Its pathway is cell wall biogenesis; peptidoglycan biosynthesis. Cell wall formation. The sequence is that of UDP-N-acetylenolpyruvoylglucosamine reductase from Rubrobacter xylanophilus (strain DSM 9941 / JCM 11954 / NBRC 16129 / PRD-1).